Consider the following 95-residue polypeptide: Small ribosomal subunit protein bS6 (95 aa).

The protein belongs to the bacterial ribosomal protein bS6 family.

Functionally, binds together with bS18 to 16S ribosomal RNA. This chain is Small ribosomal subunit protein bS6, found in Corynebacterium urealyticum (strain ATCC 43042 / DSM 7109).